We begin with the raw amino-acid sequence, 131 residues long: L-ectoine synthase (131 aa).

It belongs to the ectoine synthase family.

It carries out the reaction (2S)-4-acetamido-2-aminobutanoate = L-ectoine + H2O. The protein operates within amine and polyamine biosynthesis; ectoine biosynthesis; L-ectoine from L-aspartate 4-semialdehyde: step 3/3. Catalyzes the circularization of gamma-N-acetyl-alpha,gamma-diaminobutyric acid (ADABA) to ectoine (1,4,5,6-tetrahydro-2-methyl-4-pyrimidine carboxylic acid), which is an excellent osmoprotectant. This chain is L-ectoine synthase, found in Wolinella succinogenes (strain ATCC 29543 / DSM 1740 / CCUG 13145 / JCM 31913 / LMG 7466 / NCTC 11488 / FDC 602W) (Vibrio succinogenes).